Here is an 87-residue protein sequence, read N- to C-terminus: HssA/B-like protein 55 (87 aa).

Polar residues predominate over residues 1–13 (MTILSAITSISRP). Positions 1–31 (MTILSAITSISRPNKSSKSVVSSNGGSSLSM) are disordered. Residues 14-31 (NKSSKSVVSSNGGSSLSM) show a composition bias toward low complexity.

The protein belongs to the hssA/B family.

This Dictyostelium discoideum (Social amoeba) protein is HssA/B-like protein 55 (hssl55).